Consider the following 159-residue polypeptide: Phosphopantetheine adenylyltransferase (159 aa).

Residue Ser9 participates in substrate binding. Residues Ser9–Phe10 and His17 contribute to the ATP site. The substrate site is built by Lys41, Ile73, and Lys87. ATP contacts are provided by residues Gly88–Arg90, Glu98, and Trp122–Ser128.

It belongs to the bacterial CoaD family. In terms of assembly, homohexamer. It depends on Mg(2+) as a cofactor.

The protein resides in the cytoplasm. The catalysed reaction is (R)-4'-phosphopantetheine + ATP + H(+) = 3'-dephospho-CoA + diphosphate. Its pathway is cofactor biosynthesis; coenzyme A biosynthesis; CoA from (R)-pantothenate: step 4/5. Reversibly transfers an adenylyl group from ATP to 4'-phosphopantetheine, yielding dephospho-CoA (dPCoA) and pyrophosphate. This is Phosphopantetheine adenylyltransferase from Nocardioides sp. (strain ATCC BAA-499 / JS614).